Consider the following 379-residue polypeptide: Cytochrome b (379 aa).

Transmembrane regions (helical) follow at residues 33–53 (FGSLLGLCLISQILTGLFLAM), 77–98 (WLIRNLHANGASFFFICLYLHI), 113–133 (WNIGVVLFLLVMMTAFVGYVL), and 178–198 (FFAFHFLFPFVVAGATMIHLL). Heme b-binding residues include His83 and His97. Heme b-binding residues include His182 and His196. His201 provides a ligand contact to a ubiquinone. 4 consecutive transmembrane segments (helical) span residues 226-246 (YKDLLGFIIMLTALTMLALFY), 288-308 (LGGVLALLSSILVLMVVPILH), 320-340 (ASQLLFWILVADMLVLTWIGG), and 347-367 (YIIIGQVASVLYFSLFLVLNP).

The protein belongs to the cytochrome b family. The cytochrome bc1 complex contains 3 respiratory subunits (MT-CYB, CYC1 and UQCRFS1), 2 core proteins (UQCRC1 and UQCRC2) and probably 6 low-molecular weight proteins. It depends on heme b as a cofactor.

The protein resides in the mitochondrion inner membrane. In terms of biological role, component of the ubiquinol-cytochrome c reductase complex (complex III or cytochrome b-c1 complex) that is part of the mitochondrial respiratory chain. The b-c1 complex mediates electron transfer from ubiquinol to cytochrome c. Contributes to the generation of a proton gradient across the mitochondrial membrane that is then used for ATP synthesis. The sequence is that of Cytochrome b (mt-cyb) from Anguilla dieffenbachii (New Zealand longfin eel).